A 319-amino-acid polypeptide reads, in one-letter code: Ribonucleoside-diphosphate reductase small chain (319 aa).

Residues 313–319 (FSLDVDF) are interaction with R1.

This sequence belongs to the ribonucleoside diphosphate reductase small chain family. Interacts with RNR1/OPG080 subunit. Can interact with host RNR1 supunit. Fe cation serves as cofactor.

The catalysed reaction is a 2'-deoxyribonucleoside 5'-diphosphate + [thioredoxin]-disulfide + H2O = a ribonucleoside 5'-diphosphate + [thioredoxin]-dithiol. Its function is as follows. Ribonucleoside-diphosphate reductase holoenzyme provides the precursors necessary for viral DNA synthesis. Allows virus growth in non-dividing cells. Catalyzes the biosynthesis of deoxyribonucleotides from the corresponding ribonucleotides. The chain is Ribonucleoside-diphosphate reductase small chain (OPG048) from Cynomys gunnisoni (Gunnison's prairie dog).